The chain runs to 113 residues: Cell cycle control protein 50C (113 aa).

Residues 1-34 (MEERAQHCLSRLLDNSALKQQELPIHRLYFTARR) are Cytoplasmic-facing. Residues 35 to 55 (VLFVFFATGIFCLCMGIILIL) traverse the membrane as a helical segment. Residues 56 to 113 (SARSTQEIEINYTRICANCAKLRENASNFDKECTCSIPFYLSGKMMVGEIQETRLTLH) are Extracellular-facing. Residue N66 is glycosylated (N-linked (GlcNAc...) asparagine).

The protein belongs to the CDC50/LEM3 family. In terms of tissue distribution, specifically expressed in testis.

Its subcellular location is the membrane. This Homo sapiens (Human) protein is Cell cycle control protein 50C.